Consider the following 164-residue polypeptide: Interferon gamma (164 aa).

Positions 1 to 19 (MTCQTYNLFVLSVIMIYYG) are cleaved as a signal peptide. Residues asparagine 42 and asparagine 61 are each glycosylated (N-linked (GlcNAc...) asparagine).

This sequence belongs to the type II (or gamma) interferon family. As to quaternary structure, homodimer.

The protein localises to the secreted. In terms of biological role, produced by lymphocytes activated by specific antigens or mitogens. IFN-gamma, in addition to having antiviral activity, has important immunoregulatory functions. It is a potent activator of macrophages, it has antiproliferative effects on transformed cells and it can potentiate the antiviral and antitumor effects of the type I interferons. The chain is Interferon gamma (IFNG) from Meleagris gallopavo (Wild turkey).